We begin with the raw amino-acid sequence, 69 residues long: Large ribosomal subunit protein uL29 (69 aa).

Belongs to the universal ribosomal protein uL29 family.

The chain is Large ribosomal subunit protein uL29 from Thermoanaerobacter pseudethanolicus (strain ATCC 33223 / 39E) (Clostridium thermohydrosulfuricum).